The sequence spans 701 residues: Polyribonucleotide nucleotidyltransferase (701 aa).

Mg(2+)-binding residues include Asp487 and Asp493. The region spanning 554–613 (PTMIAMKIDTDKIRDVIGKGGATIRAICEETKASIDIEDDGSIKIFGESKEAAEAARQRV) is the KH domain. The 69-residue stretch at 623 to 691 (GKIYIGKVER…NRGRIKLSIK (69 aa)) folds into the S1 motif domain.

It belongs to the polyribonucleotide nucleotidyltransferase family. Component of the RNA degradosome, which is a multiprotein complex involved in RNA processing and mRNA degradation. Mg(2+) serves as cofactor.

The protein resides in the cytoplasm. The enzyme catalyses RNA(n+1) + phosphate = RNA(n) + a ribonucleoside 5'-diphosphate. Involved in mRNA degradation. Catalyzes the phosphorolysis of single-stranded polyribonucleotides processively in the 3'- to 5'-direction. In Pseudomonas syringae pv. syringae (strain B728a), this protein is Polyribonucleotide nucleotidyltransferase.